The chain runs to 125 residues: Ribosome-binding factor A (125 aa).

The protein belongs to the RbfA family. Monomer. Binds 30S ribosomal subunits, but not 50S ribosomal subunits or 70S ribosomes.

The protein localises to the cytoplasm. Its function is as follows. One of several proteins that assist in the late maturation steps of the functional core of the 30S ribosomal subunit. Associates with free 30S ribosomal subunits (but not with 30S subunits that are part of 70S ribosomes or polysomes). Required for efficient processing of 16S rRNA. May interact with the 5'-terminal helix region of 16S rRNA. The polypeptide is Ribosome-binding factor A (Chloroherpeton thalassium (strain ATCC 35110 / GB-78)).